The primary structure comprises 295 residues: Ribosomal protein L11 methyltransferase (295 aa).

S-adenosyl-L-methionine is bound by residues T145, G166, D188, and N230.

This sequence belongs to the methyltransferase superfamily. PrmA family.

The protein resides in the cytoplasm. The enzyme catalyses L-lysyl-[protein] + 3 S-adenosyl-L-methionine = N(6),N(6),N(6)-trimethyl-L-lysyl-[protein] + 3 S-adenosyl-L-homocysteine + 3 H(+). Methylates ribosomal protein L11. This Haemophilus influenzae (strain PittEE) protein is Ribosomal protein L11 methyltransferase.